The following is a 1873-amino-acid chain: Kinesin-related protein 8 (1873 aa).

One can recognise a Kinesin motor domain in the interval 13-413 (CVRVALRVRP…LKYAYRARNI (401 aa)). 93-100 (GQTGSGKT) is an ATP binding site. Disordered regions lie at residues 231 to 302 (NSPV…DERN), 463 to 567 (VSIP…SPTS), 778 to 797 (LDKD…YYED), 841 to 891 (KIDS…ARKT), 930 to 1008 (KQRV…TEQL), 1179 to 1207 (PQPL…QRSS), 1244 to 1267 (LPSQ…STSS), 1328 to 1360 (TTTT…NNSS), and 1403 to 1467 (NNIT…PRPD). Positions 232-247 (SPVTSSSTSSTSTSSS) are enriched in low complexity. Residues 280–297 (IDEDEEDDEEDEDDDIMS) are compositionally biased toward acidic residues. A compositionally biased stretch (low complexity) spans 473-567 (TPTLTNNNNN…NNTATPSPTS (95 aa)). The stretch at 715 to 933 (FENDSEELSD…KEIEVHKQRV (219 aa)) forms a coiled coil. 5 stretches are compositionally biased toward low complexity: residues 937–1005 (INSK…TPTT), 1182–1200 (LQSQ…NSEQ), 1244–1254 (LPSQQQLSSSQ), 1348–1358 (NNTNNNNNNNN), and 1423–1454 (SLQS…SNNN). WD repeat units follow at residues 1506–1546 (GHDG…NMLD), 1548–1587 (SSPG…NTNL), 1589–1628 (IFKT…KPLK), 1636–1673 (HHTG…LAQK), and 1677–1714 (PHHD…NLIN). The interval 1758 to 1780 (NNNNNNSSNNNKSSSAPSSTTSS) is disordered. WD repeat units follow at residues 1805-1842 (AHND…NSLL) and 1844-1873 (GHES…IWKC).

Belongs to the TRAFAC class myosin-kinesin ATPase superfamily. Kinesin family.

It localises to the cytoplasm. It is found in the cytoskeleton. In terms of biological role, microtubule-associated force-producing protein that plays a role in organelle transport. Its motor activity is directed toward the microtubule's plus end. Cooperates with kif10 and dynein to organize interphase microtubules. This is Kinesin-related protein 8 (kif8) from Dictyostelium discoideum (Social amoeba).